We begin with the raw amino-acid sequence, 695 residues long: Lysophospholipase 2 (695 aa).

Residues Met1–Ala19 form the signal peptide. N-linked (GlcNAc...) asparagine glycosylation is found at Asn26, Asn72, Asn83, Asn115, Asn152, Asn171, Asn207, Asn269, Asn335, Asn379, Asn480, Asn504, Asn513, Asn532, Asn556, Asn573, Asn620, Asn626, Asn644, and Asn648. The PLA2c domain occupies Ser28 to Asp577. Residues Asn612 to Ser662 are disordered.

The protein belongs to the lysophospholipase family.

The protein resides in the secreted. The protein localises to the cell wall. It catalyses the reaction a 1-acyl-sn-glycero-3-phosphocholine + H2O = sn-glycerol 3-phosphocholine + a fatty acid + H(+). Catalyzes the release of fatty acids from lysophospholipids. Phospholipase B may well contribute to pathogenicity by abetting the fungus in damaging and traversing host cell membranes, processes which likely increase the rapidity of disseminated infection. The chain is Lysophospholipase 2 from Candida glabrata (strain ATCC 2001 / BCRC 20586 / JCM 3761 / NBRC 0622 / NRRL Y-65 / CBS 138) (Yeast).